Here is a 447-residue protein sequence, read N- to C-terminus: Cobyrinate a,c-diamide synthase (447 aa).

The GATase cobBQ-type domain occupies lysine 252–tyrosine 439. Cysteine 331 functions as the Nucleophile in the catalytic mechanism.

It belongs to the CobB/CbiA family. Mg(2+) serves as cofactor.

It carries out the reaction cob(II)yrinate + 2 L-glutamine + 2 ATP + 2 H2O = cob(II)yrinate a,c diamide + 2 L-glutamate + 2 ADP + 2 phosphate + 2 H(+). The catalysed reaction is Ni-sirohydrochlorin + 2 L-glutamine + 2 ATP + 2 H2O = Ni-sirohydrochlorin a,c-diamide + 2 L-glutamate + 2 ADP + 2 phosphate + 2 H(+). It functions in the pathway cofactor biosynthesis; adenosylcobalamin biosynthesis; cob(II)yrinate a,c-diamide from sirohydrochlorin (anaerobic route): step 10/10. Functionally, catalyzes the ATP-dependent amidation of the two carboxylate groups at positions a and c of cobyrinate, using either L-glutamine or ammonia as the nitrogen source. Involved in the biosynthesis of the unique nickel-containing tetrapyrrole coenzyme F430, the prosthetic group of methyl-coenzyme M reductase (MCR), which plays a key role in methanogenesis and anaerobic methane oxidation. Catalyzes the ATP-dependent amidation of the two carboxylate groups at positions a and c of Ni-sirohydrochlorin, using L-glutamine or ammonia as the nitrogen source. The polypeptide is Cobyrinate a,c-diamide synthase (Methanococcus maripaludis (strain C5 / ATCC BAA-1333)).